An 85-amino-acid chain; its full sequence is Progonadoliberin-2 (85 aa).

Residues 1–23 (MCVSRLVLLFGLLLCVGAQLSNA) form the signal peptide. A Pyrrolidone carboxylic acid modification is found at Gln-24. Glycine amide is present on Gly-33.

Belongs to the GnRH family.

The protein localises to the secreted. In terms of biological role, stimulates the secretion of gonadotropins. The sequence is that of Progonadoliberin-2 (gnrh2) from Dicentrarchus labrax (European seabass).